The chain runs to 67 residues: Large ribosomal subunit protein uL29 (67 aa).

This sequence belongs to the universal ribosomal protein uL29 family.

The protein is Large ribosomal subunit protein uL29 of Methanosarcina mazei (strain ATCC BAA-159 / DSM 3647 / Goe1 / Go1 / JCM 11833 / OCM 88) (Methanosarcina frisia).